Reading from the N-terminus, the 382-residue chain is Mannosyl phosphorylinositol ceramide synthase SUR1 (382 aa).

Over 1–6 (MRKELK) the chain is Cytoplasmic. A helical membrane pass occupies residues 7–27 (YLICFNILLLLSIIYYTFDLL). The Extracellular segment spans residues 28-269 (TLCIDDTVKD…KALENHILSC (242 aa)). A helical transmembrane segment spans residues 270-290 (VVTGFIFGFFILYGEFTFYCW). Topologically, residues 291–382 (LCSKNFSNLT…SKYSLGNNSS (92 aa)) are cytoplasmic. Phosphoserine is present on S349.

Belongs to the glycosyltransferase 32 family. In terms of assembly, heterodimer of SUR1 and CSG2.

It is found in the membrane. The catalysed reaction is a 1D-myo-inositol-1-phospho-N-[(R)-2-hydroxy-very-long-chain fatty acyl]-(R)-4-hydroxysphingoid base + GDP-alpha-D-mannose = an alpha-D-mannosyl-(1&lt;-&gt;6)-1D-myo-inositol-1-phospho-N-[(R)-2-hydroxy-very-long-chain fatty acyl]-(R)-4-hydroxysphingoid base + GDP + H(+). Involved in the synthesis of mannosyl phosphorylinositol ceramide. Catalyzes the addition of mannosyl to phosphorylinositol ceramide. Suppressor of RVS161 mutation. In Saccharomyces cerevisiae (strain ATCC 204508 / S288c) (Baker's yeast), this protein is Mannosyl phosphorylinositol ceramide synthase SUR1.